A 137-amino-acid chain; its full sequence is Methylglyoxal synthase (137 aa).

The MGS-like domain occupies 1-137 (MNIALVAHDK…KLSHNDEPPA (137 aa)). Residues histidine 8, lysine 12, 34 to 37 (TGTT), and 54 to 55 (SG) contribute to the substrate site. Aspartate 60 (proton donor/acceptor) is an active-site residue. Position 87 (histidine 87) interacts with substrate.

The protein belongs to the methylglyoxal synthase family.

The enzyme catalyses dihydroxyacetone phosphate = methylglyoxal + phosphate. In terms of biological role, catalyzes the formation of methylglyoxal from dihydroxyacetone phosphate. This chain is Methylglyoxal synthase, found in Exiguobacterium sp. (strain ATCC BAA-1283 / AT1b).